Reading from the N-terminus, the 770-residue chain is PH and SEC7 domain-containing protein 2 (770 aa).

The span at 1–24 (MDEEKLPCELHKEGSATQEDHGLE) shows a compositional bias: basic and acidic residues. Disordered regions lie at residues 1–65 (MDEE…RGPD) and 181–304 (IQQR…ANGC). The span at 32–45 (QNGTAASEGLSSHI) shows a compositional bias: polar residues. The residue at position 188 (Ser-188) is a Phosphoserine. Low complexity-rich tracts occupy residues 216–234 (LGSP…NVLS) and 285–296 (ELSSSEGLEPGS). In terms of domain architecture, SEC7 spans 256–459 (DDEDDEDTDK…KTLYNSIKNE (204 aa)). The 114-residue stretch at 509–622 (TTYKHGVLTR…WILRINLVAA (114 aa)) folds into the PH domain. The chain crosses the membrane as a helical span at residues 619 to 636 (LVAAIFSAPAFPAAVSSM). Residues 650–677 (RLCQEEQLRSHENKLRQVTAELAEHRCH) are a coiled coil. A disordered region spans residues 738 to 770 (PALRKTHSSPALSLGHGPVTGSKATKDTSASDT).

This sequence belongs to the PSD family.

It is found in the cell membrane. The protein localises to the cell projection. The protein resides in the ruffle membrane. It localises to the cleavage furrow. In Mus musculus (Mouse), this protein is PH and SEC7 domain-containing protein 2 (Psd2).